A 388-amino-acid chain; its full sequence is Venom acid phosphatase Acph-1 (388 aa).

Residues 1–15 form the signal peptide; the sequence is MSVIAILAMVVGVQA. Residue histidine 26 is the Nucleophile of the active site. 2 disulfide bridges follow: cysteine 145-cysteine 355 and cysteine 330-cysteine 334. N-linked (GlcNAc...) asparagine glycans are attached at residues asparagine 182 and asparagine 228. The active-site Proton donor is the glutamate 273. Asparagine 366 carries N-linked (GlcNAc...) asparagine glycosylation.

This sequence belongs to the histidine acid phosphatase family. As to expression, expressed by the venom gland.

It localises to the secreted. It carries out the reaction a phosphate monoester + H2O = an alcohol + phosphate. This Apis mellifera (Honeybee) protein is Venom acid phosphatase Acph-1.